The sequence spans 282 residues: Shikimate dehydrogenase (NADP(+)) (282 aa).

Residues 18-20 (SRS) and T65 each bind shikimate. K69 functions as the Proton acceptor in the catalytic mechanism. Shikimate contacts are provided by N90 and D106. Residues 134-138 (GAGGA), 158-163 (NRTAAR), and I223 each bind NADP(+). Y225 is a binding site for shikimate. Residue G246 participates in NADP(+) binding.

It belongs to the shikimate dehydrogenase family. As to quaternary structure, homodimer.

The enzyme catalyses shikimate + NADP(+) = 3-dehydroshikimate + NADPH + H(+). It functions in the pathway metabolic intermediate biosynthesis; chorismate biosynthesis; chorismate from D-erythrose 4-phosphate and phosphoenolpyruvate: step 4/7. Its function is as follows. Involved in the biosynthesis of the chorismate, which leads to the biosynthesis of aromatic amino acids. Catalyzes the reversible NADPH linked reduction of 3-dehydroshikimate (DHSA) to yield shikimate (SA). The sequence is that of Shikimate dehydrogenase (NADP(+)) from Methylobacterium radiotolerans (strain ATCC 27329 / DSM 1819 / JCM 2831 / NBRC 15690 / NCIMB 10815 / 0-1).